The chain runs to 439 residues: Cytochrome b-c1 complex reductase subunit, mitochondrial (439 aa).

A mitochondrion-targeting transit peptide spans 1–17 (MIRGSSALKSLTSRRLY).

It belongs to the peptidase M16 family. UQCRC1/QCR1 subfamily. In terms of assembly, component of the ubiquinol-cytochrome c oxidoreductase (cytochrome b-c1 complex, complex III, CIII), a multisubunit enzyme composed of 10 subunits. The complex is composed of 3 respiratory subunits cytochrome b (COB), cytochrome c1 (CYT1) and Rieske protein (RIP1), 2 core protein subunits COR1 and QCR2, and 5 low-molecular weight protein subunits QCR6, QCR7, QCR8, QCR9 and QCR10. The complex exists as an obligatory dimer and forms supercomplexes (SCs) in the inner mitochondrial membrane with a monomer or a dimer of cytochrome c oxidase (complex IV, CIV), resulting in 2 different assemblies (supercomplexes III(2)IV and III(2)IV(2)).

Its subcellular location is the mitochondrion inner membrane. Its function is as follows. Component of the ubiquinol-cytochrome c oxidoreductase, a multisubunit transmembrane complex that is part of the mitochondrial electron transport chain which drives oxidative phosphorylation. The complex plays an important role in the uptake of multiple carbon sources present in different host niches. The polypeptide is Cytochrome b-c1 complex reductase subunit, mitochondrial (Candida albicans (strain SC5314 / ATCC MYA-2876) (Yeast)).